The sequence spans 634 residues: Chaperone protein HtpG (634 aa).

The segment at 1–342 is a; substrate-binding; the sequence is MTVETQKETL…SNDLSLNVSR (342 aa). A b region spans residues 343–559; that stretch reads EILQKDPIID…EQDLGLQMRQ (217 aa). The tract at residues 560-634 is c; sequence ILEASGQKVP…LNKLLVELSA (75 aa).

Belongs to the heat shock protein 90 family. As to quaternary structure, homodimer.

It localises to the cytoplasm. In terms of biological role, molecular chaperone. Has ATPase activity. In Pseudomonas putida (strain ATCC 47054 / DSM 6125 / CFBP 8728 / NCIMB 11950 / KT2440), this protein is Chaperone protein HtpG.